The sequence spans 384 residues: Putative glycosyltransferase EpsF (384 aa).

Belongs to the glycosyltransferase group 1 family. Glycosyltransferase 4 subfamily.

Its function is as follows. May be involved in the production of the exopolysaccharide (EPS) component of the extracellular matrix during biofilm formation. EPS is responsible for the adhesion of chains of cells into bundles. Required for biofilm maintenance. This Bacillus subtilis (strain 168) protein is Putative glycosyltransferase EpsF (epsF).